The primary structure comprises 253 residues: Imidazole glycerol phosphate synthase subunit HisF (253 aa).

Residues D11 and D130 contribute to the active site.

The protein belongs to the HisA/HisF family. As to quaternary structure, heterodimer of HisH and HisF.

Its subcellular location is the cytoplasm. It catalyses the reaction 5-[(5-phospho-1-deoxy-D-ribulos-1-ylimino)methylamino]-1-(5-phospho-beta-D-ribosyl)imidazole-4-carboxamide + L-glutamine = D-erythro-1-(imidazol-4-yl)glycerol 3-phosphate + 5-amino-1-(5-phospho-beta-D-ribosyl)imidazole-4-carboxamide + L-glutamate + H(+). It functions in the pathway amino-acid biosynthesis; L-histidine biosynthesis; L-histidine from 5-phospho-alpha-D-ribose 1-diphosphate: step 5/9. In terms of biological role, IGPS catalyzes the conversion of PRFAR and glutamine to IGP, AICAR and glutamate. The HisF subunit catalyzes the cyclization activity that produces IGP and AICAR from PRFAR using the ammonia provided by the HisH subunit. This Thermotoga sp. (strain RQ2) protein is Imidazole glycerol phosphate synthase subunit HisF.